The chain runs to 77 residues: U8-lycotoxin-Ls1e (77 aa).

The signal sequence occupies residues 1–20; sequence MKLIIFTGLVLFAIVSLIEA. Residues 21 to 26 constitute a propeptide that is removed on maturation; it reads QAENEK.

This sequence belongs to the neurotoxin 19 (CSTX) family. 08 (U8-Lctx) subfamily. Contains 4 disulfide bonds. As to expression, expressed by the venom gland.

It localises to the secreted. This chain is U8-lycotoxin-Ls1e, found in Lycosa singoriensis (Wolf spider).